A 785-amino-acid polypeptide reads, in one-letter code: Endonuclease MutS2 (785 aa).

335 to 342 is an ATP binding site; that stretch reads GPNTGGKT. The region spanning 710-785 is the Smr domain; it reads LDLRGERYEN…GSGVTIVELK (76 aa).

Belongs to the DNA mismatch repair MutS family. MutS2 subfamily. Homodimer. Binds to stalled ribosomes, contacting rRNA.

In terms of biological role, endonuclease that is involved in the suppression of homologous recombination and thus may have a key role in the control of bacterial genetic diversity. Its function is as follows. Acts as a ribosome collision sensor, splitting the ribosome into its 2 subunits. Detects stalled/collided 70S ribosomes which it binds and splits by an ATP-hydrolysis driven conformational change. Acts upstream of the ribosome quality control system (RQC), a ribosome-associated complex that mediates the extraction of incompletely synthesized nascent chains from stalled ribosomes and their subsequent degradation. Probably generates substrates for RQC. The chain is Endonuclease MutS2 from Bacillus velezensis (strain DSM 23117 / BGSC 10A6 / LMG 26770 / FZB42) (Bacillus amyloliquefaciens subsp. plantarum).